We begin with the raw amino-acid sequence, 228 residues long: MLNKLSAEFFGTFWLVFGGCGSAILAAAFPELGIGFLGVALAFGLTVLTMAYAVGGISGGHFNPAVSLGLTVAGRLPAKDLIPYWVAQVLGAIAAAAILYVIASGKDGFSAGGLASNGYGELSPGGYSMMAGLLIEIILTAFFIIIILGSTSSLAPAGFAPIAIGFGLTLIHLVSIPVTNTWVNPARSTGVALFADTAALSQLWLFWVAPLVGAVIGAIIWKGLLGRD.

2 helical membrane passes run 1 to 21 (MLNK…GGCG) and 23 to 43 (AILA…ALAF). Positions 63 to 65 (NPA) match the NPA 1 motif. Helical transmembrane passes span 82–102 (IPYW…LYVI), 129–149 (MMAG…IILG), and 154–174 (LAPA…IHLV). Residues 184–186 (NPA) carry the NPA 2 motif. A helical membrane pass occupies residues 205-225 (LFWVAPLVGAVIGAIIWKGLL).

It belongs to the MIP/aquaporin (TC 1.A.8) family. In terms of assembly, homotetramer.

The protein resides in the cell inner membrane. It carries out the reaction H2O(in) = H2O(out). Its function is as follows. Channel that permits osmotically driven movement of water in both directions. It is involved in the osmoregulation and in the maintenance of cell turgor during volume expansion in rapidly growing cells. It mediates rapid entry or exit of water in response to abrupt changes in osmolarity. In Brucella melitensis biotype 1 (strain ATCC 23456 / CCUG 17765 / NCTC 10094 / 16M), this protein is Aquaporin Z.